The sequence spans 350 residues: Glyceraldehyde-3-phosphate dehydrogenase (350 aa).

NAD(+) contacts are provided by residues 10 to 11, D36, R82, and S125; that span reads RI. Residues 161–163, T193, 222–223, and R245 each bind D-glyceraldehyde 3-phosphate; these read SCT and TG. The Nucleophile role is filled by C162. N331 contributes to the NAD(+) binding site.

This sequence belongs to the glyceraldehyde-3-phosphate dehydrogenase family. In terms of assembly, homotetramer.

Its subcellular location is the cytoplasm. The enzyme catalyses D-glyceraldehyde 3-phosphate + phosphate + NAD(+) = (2R)-3-phospho-glyceroyl phosphate + NADH + H(+). Its pathway is carbohydrate degradation; glycolysis; pyruvate from D-glyceraldehyde 3-phosphate: step 1/5. Functionally, catalyzes the oxidative phosphorylation of glyceraldehyde 3-phosphate (G3P) to 1,3-bisphosphoglycerate (BPG) using the cofactor NAD. The first reaction step involves the formation of a hemiacetal intermediate between G3P and a cysteine residue, and this hemiacetal intermediate is then oxidized to a thioester, with concomitant reduction of NAD to NADH. The reduced NADH is then exchanged with the second NAD, and the thioester is attacked by a nucleophilic inorganic phosphate to produce BPG. In Treponema pallidum (strain Nichols), this protein is Glyceraldehyde-3-phosphate dehydrogenase (gap).